The primary structure comprises 154 residues: Putative nuclear shuttle protein (154 aa).

This sequence belongs to the nanoviridae nuclear shuttle protein family.

It localises to the host nucleus. It is found in the host cytoplasm. Putative nuclear shuttle protein. The chain is Putative nuclear shuttle protein (DNA-N) from Musa (BBTV).